The following is a 201-amino-acid chain: MELVLKDAQSALTVSETTFGRDFNEALVHQVVVAYAAGARQGTRAQKTRAEVTGSGKKPWRQKGTGRARSGSIKSPIWRSGGVTFAARPQDHSQKVNKKMYRGALKSILSELVRQDRLIVVEKFSVEAPKTKLLAQKLKDMALEDVLIITGELDENLFLAARNLHKVDVRDATGIDPVSLIAFDKVVMTADAVKQVEEMLA.

The segment at 44–71 (RAQKTRAEVTGSGKKPWRQKGTGRARSG) is disordered.

This sequence belongs to the universal ribosomal protein uL4 family. In terms of assembly, part of the 50S ribosomal subunit.

In terms of biological role, one of the primary rRNA binding proteins, this protein initially binds near the 5'-end of the 23S rRNA. It is important during the early stages of 50S assembly. It makes multiple contacts with different domains of the 23S rRNA in the assembled 50S subunit and ribosome. Its function is as follows. Forms part of the polypeptide exit tunnel. This Escherichia fergusonii (strain ATCC 35469 / DSM 13698 / CCUG 18766 / IAM 14443 / JCM 21226 / LMG 7866 / NBRC 102419 / NCTC 12128 / CDC 0568-73) protein is Large ribosomal subunit protein uL4.